The sequence spans 348 residues: tRNA N6-adenosine threonylcarbamoyltransferase (348 aa).

Positions 111 and 115 each coordinate Fe cation. Residues 134-138 (LVSGG), Asp-167, Gly-180, and Asn-276 each bind substrate. Fe cation is bound at residue Asp-304.

It belongs to the KAE1 / TsaD family. Fe(2+) is required as a cofactor.

The protein localises to the cytoplasm. It catalyses the reaction L-threonylcarbamoyladenylate + adenosine(37) in tRNA = N(6)-L-threonylcarbamoyladenosine(37) in tRNA + AMP + H(+). Required for the formation of a threonylcarbamoyl group on adenosine at position 37 (t(6)A37) in tRNAs that read codons beginning with adenine. Is involved in the transfer of the threonylcarbamoyl moiety of threonylcarbamoyl-AMP (TC-AMP) to the N6 group of A37, together with TsaE and TsaB. TsaD likely plays a direct catalytic role in this reaction. This Bordetella petrii (strain ATCC BAA-461 / DSM 12804 / CCUG 43448) protein is tRNA N6-adenosine threonylcarbamoyltransferase.